A 132-amino-acid chain; its full sequence is Ribosome-binding factor A (132 aa).

It belongs to the RbfA family. Monomer. Binds 30S ribosomal subunits, but not 50S ribosomal subunits or 70S ribosomes.

Its subcellular location is the cytoplasm. Functionally, one of several proteins that assist in the late maturation steps of the functional core of the 30S ribosomal subunit. Associates with free 30S ribosomal subunits (but not with 30S subunits that are part of 70S ribosomes or polysomes). Required for efficient processing of 16S rRNA. May interact with the 5'-terminal helix region of 16S rRNA. The protein is Ribosome-binding factor A of Pasteurella multocida (strain Pm70).